We begin with the raw amino-acid sequence, 450 residues long: tRNA-2-methylthio-N(6)-dimethylallyladenosine synthase (450 aa).

The 119-residue stretch at glycine 14 to lysine 132 folds into the MTTase N-terminal domain. [4Fe-4S] cluster is bound by residues cysteine 23, cysteine 59, cysteine 93, cysteine 169, cysteine 173, and cysteine 176. The region spanning arginine 155 to lysine 385 is the Radical SAM core domain. The region spanning lysine 388–isoleucine 450 is the TRAM domain.

The protein belongs to the methylthiotransferase family. MiaB subfamily. Monomer. It depends on [4Fe-4S] cluster as a cofactor.

Its subcellular location is the cytoplasm. The catalysed reaction is N(6)-dimethylallyladenosine(37) in tRNA + (sulfur carrier)-SH + AH2 + 2 S-adenosyl-L-methionine = 2-methylsulfanyl-N(6)-dimethylallyladenosine(37) in tRNA + (sulfur carrier)-H + 5'-deoxyadenosine + L-methionine + A + S-adenosyl-L-homocysteine + 2 H(+). Catalyzes the methylthiolation of N6-(dimethylallyl)adenosine (i(6)A), leading to the formation of 2-methylthio-N6-(dimethylallyl)adenosine (ms(2)i(6)A) at position 37 in tRNAs that read codons beginning with uridine. The sequence is that of tRNA-2-methylthio-N(6)-dimethylallyladenosine synthase from Clostridium botulinum (strain Langeland / NCTC 10281 / Type F).